We begin with the raw amino-acid sequence, 185 residues long: Alkyl hydroperoxide reductase AhpD (185 aa).

Catalysis depends on Cys132, which acts as the Proton donor. A disulfide bridge links Cys132 with Cys135. Cys135 (cysteine sulfenic acid (-SOH) intermediate) is an active-site residue.

This sequence belongs to the AhpD family.

The catalysed reaction is N(6)-[(R)-dihydrolipoyl]-L-lysyl-[lipoyl-carrier protein] + a hydroperoxide = N(6)-[(R)-lipoyl]-L-lysyl-[lipoyl-carrier protein] + an alcohol + H2O. In terms of biological role, antioxidant protein with alkyl hydroperoxidase activity. Required for the reduction of the AhpC active site cysteine residues and for the regeneration of the AhpC enzyme activity. In Anaeromyxobacter sp. (strain Fw109-5), this protein is Alkyl hydroperoxide reductase AhpD.